Reading from the N-terminus, the 310-residue chain is Olfactory receptor 7A42 (310 aa).

Over 1 to 25 (MESGNSTRRIPSFFLLGFSENPHLQ) the chain is Extracellular. An N-linked (GlcNAc...) asparagine glycan is attached at N5. Residues 26-46 (FLIFVLFLSMYLVTVLGNLLI) form a helical membrane-spanning segment. The Cytoplasmic portion of the chain corresponds to 47-67 (IMVIITQSPLHTPMYFFLANL). The helical transmembrane segment at 68–88 (SFVDICFTSTTVPKMLVNIQT) threads the bilayer. The Extracellular segment spans residues 89 to 100 (QSKAITYADCIS). C98 and C190 are disulfide-bonded. Residues 101–121 (QMSVFLVFAELDNFLLAVMAY) form a helical membrane-spanning segment. Residues 122-135 (DRYVAICHPLYYTF) are Cytoplasmic-facing. A helical transmembrane segment spans residues 136–156 (IVNQHLCILMVLLSWVVSILH). The Extracellular portion of the chain corresponds to 157 to 202 (AFLQSSIVLQLTFCGDVKIPHFFCELNQLSQLTCLDSLSSHLIMNL). Residues 203–223 (VPVLLAVISFSSILYSYFKIV) form a helical membrane-spanning segment. At 224-240 (SSICSISSVQGKYTAFS) the chain is on the cytoplasmic side. The helical transmembrane segment at 241-261 (TCVSHLSIVFLFYSTGLGVYV) threads the bilayer. The Extracellular segment spans residues 262–272 (SSAVVQSSHSA). Residues 273–293 (ARASVMYTVVTPMLNPFIYSL) traverse the membrane as a helical segment. The Cytoplasmic portion of the chain corresponds to 294–310 (RNKDVKKALERLLEGKL).

Belongs to the G-protein coupled receptor 1 family.

It is found in the cell membrane. In terms of biological role, odorant receptor. The chain is Olfactory receptor 7A42 from Mus musculus (Mouse).